Consider the following 465-residue polypeptide: Light-independent protochlorophyllide reductase subunit N (465 aa).

The [4Fe-4S] cluster site is built by Cys22, Cys47, and Cys107.

The protein belongs to the BchN/ChlN family. In terms of assembly, protochlorophyllide reductase is composed of three subunits; ChlL, ChlN and ChlB. Forms a heterotetramer of two ChlB and two ChlN subunits. The cofactor is [4Fe-4S] cluster.

It localises to the plastid. The protein localises to the chloroplast. The enzyme catalyses chlorophyllide a + oxidized 2[4Fe-4S]-[ferredoxin] + 2 ADP + 2 phosphate = protochlorophyllide a + reduced 2[4Fe-4S]-[ferredoxin] + 2 ATP + 2 H2O. The protein operates within porphyrin-containing compound metabolism; chlorophyll biosynthesis (light-independent). Component of the dark-operative protochlorophyllide reductase (DPOR) that uses Mg-ATP and reduced ferredoxin to reduce ring D of protochlorophyllide (Pchlide) to form chlorophyllide a (Chlide). This reaction is light-independent. The NB-protein (ChlN-ChlB) is the catalytic component of the complex. The chain is Light-independent protochlorophyllide reductase subunit N from Marchantia polymorpha (Common liverwort).